The primary structure comprises 521 residues: Apolipoprotein N-acyltransferase (521 aa).

6 helical membrane passes run 27 to 47 (VLLA…IAFA), 64 to 84 (LGFV…TIVV), 93 to 113 (IVSV…PAVV), 125 to 145 (ISLL…RAFL), 167 to 187 (IADI…NVVL), and 202 to 222 (YPVK…AYGF). A CN hydrolase domain is found at 239-483 (IQGNIDQNIK…EAVLNGEVRL (245 aa)). Catalysis depends on Glu281, which acts as the Proton acceptor. Residue Lys344 is part of the active site. The Nucleophile role is filled by Cys394. A helical transmembrane segment spans residues 493–513 (YGDVFAWACVAGAAVVAALAF).

It belongs to the CN hydrolase family. Apolipoprotein N-acyltransferase subfamily.

It localises to the cell inner membrane. The enzyme catalyses N-terminal S-1,2-diacyl-sn-glyceryl-L-cysteinyl-[lipoprotein] + a glycerophospholipid = N-acyl-S-1,2-diacyl-sn-glyceryl-L-cysteinyl-[lipoprotein] + a 2-acyl-sn-glycero-3-phospholipid + H(+). It functions in the pathway protein modification; lipoprotein biosynthesis (N-acyl transfer). Functionally, catalyzes the phospholipid dependent N-acylation of the N-terminal cysteine of apolipoprotein, the last step in lipoprotein maturation. This Geobacter metallireducens (strain ATCC 53774 / DSM 7210 / GS-15) protein is Apolipoprotein N-acyltransferase.